A 333-amino-acid chain; its full sequence is Nucleoid-associated protein HAPS_0704 (333 aa).

This sequence belongs to the YejK family.

Its subcellular location is the cytoplasm. It localises to the nucleoid. This is Nucleoid-associated protein HAPS_0704 from Glaesserella parasuis serovar 5 (strain SH0165) (Haemophilus parasuis).